Here is a 353-residue protein sequence, read N- to C-terminus: ATP-dependent kinase YFH7 (353 aa).

Gly31–Thr39 contributes to the ATP binding site.

Belongs to the YFH7 family.

Functionally, ATP-dependent kinase that could be involved in endoplasmic reticulum membrane assembly. The chain is ATP-dependent kinase YFH7 (YFH7) from Saccharomyces cerevisiae (strain Lalvin EC1118 / Prise de mousse) (Baker's yeast).